The chain runs to 411 residues: Carbohydrate sulfotransferase 5 (411 aa).

The Cytoplasmic portion of the chain corresponds to M1–K30. A helical; Signal-anchor for type II membrane protein membrane pass occupies residues T31–I48. The Lumenal portion of the chain corresponds to S49–D411. W71–F77 is a 3'-phosphoadenylyl sulfate binding site. Residue N138 is glycosylated (N-linked (GlcNAc...) asparagine). Residue R224–S232 coordinates 3'-phosphoadenylyl sulfate. N-linked (GlcNAc...) asparagine glycosylation is found at N327 and N350.

Belongs to the sulfotransferase 1 family. Gal/GlcNAc/GalNAc subfamily. As to expression, predominantly expressed in small and large intestines and colon. Weakly expressed in lymphocytes. Not expressed in other tissues. Down-regulated in colonic adenocarcinomas.

It localises to the golgi apparatus membrane. Functionally, sulfotransferase that utilizes 3'-phospho-5'-adenylyl sulfate (PAPS) as sulfonate donor to catalyze the transfer of sulfate to position 6 of non-reducing N-acetylglucosamine (GlcNAc) residues and O-linked sugars of mucin-type acceptors. Acts on the non-reducing terminal GlcNAc of short carbohydrate substrates. However, it does not transfer sulfate to longer carbohydrate substrates that have poly-N-acetyllactosamine structures. Has no activity toward keratan. Not involved in generating HEV-expressed ligands for SELL. Its substrate specificity may be influenced by its subcellular location. The sequence is that of Carbohydrate sulfotransferase 5 (CHST5) from Homo sapiens (Human).